A 435-amino-acid chain; its full sequence is Islet cell autoantigen 1-like protein (435 aa).

Residues 44–247 enclose the AH domain; it reads ASDAELDAKL…TAQMMSQIQE (204 aa). A disordered region spans residues 391-435; it reads WASQEGSEHSDTLPVPSQHPKKLKYLGPLSNPDAIGHSDDELLNA. Positions 426–435 are enriched in basic and acidic residues; that stretch reads GHSDDELLNA.

This Rattus norvegicus (Rat) protein is Islet cell autoantigen 1-like protein (Ica1l).